A 243-amino-acid chain; its full sequence is 2-C-methyl-D-erythritol 4-phosphate cytidylyltransferase (243 aa).

It belongs to the IspD/TarI cytidylyltransferase family. IspD subfamily.

It catalyses the reaction 2-C-methyl-D-erythritol 4-phosphate + CTP + H(+) = 4-CDP-2-C-methyl-D-erythritol + diphosphate. The protein operates within isoprenoid biosynthesis; isopentenyl diphosphate biosynthesis via DXP pathway; isopentenyl diphosphate from 1-deoxy-D-xylulose 5-phosphate: step 2/6. In terms of biological role, catalyzes the formation of 4-diphosphocytidyl-2-C-methyl-D-erythritol from CTP and 2-C-methyl-D-erythritol 4-phosphate (MEP). The chain is 2-C-methyl-D-erythritol 4-phosphate cytidylyltransferase from Aeromonas hydrophila subsp. hydrophila (strain ATCC 7966 / DSM 30187 / BCRC 13018 / CCUG 14551 / JCM 1027 / KCTC 2358 / NCIMB 9240 / NCTC 8049).